The chain runs to 602 residues: ATP-dependent DNA helicase II subunit 1 (602 aa).

The 216-residue stretch at 268–483 (FQCPLILDEK…YDNMKKVTQS (216 aa)) folds into the Ku domain. Phosphoserine is present on residues Ser-370, Ser-371, and Ser-372.

Belongs to the ku70 family. In terms of assembly, heterodimer of YKU70/HDF1 and YKU80/HDF2. Sumoylated by MMS21.

Its subcellular location is the nucleus. The protein resides in the chromosome. It is found in the telomere. It catalyses the reaction ATP + H2O = ADP + phosphate + H(+). Its function is as follows. Single-stranded DNA-dependent ATP-dependent helicase. Involved in non-homologous end joining (NHEJ) DNA double strand break repair. DNA-binding is sequence-independent but has a high affinity to nicks in double-stranded DNA and to the ends of duplex DNA. Binds to naturally occurring chromosomal ends, and therefore provides chromosomal end protection. Appears to have a role in recruitment of telomerase and CDC13 to the telomere and the subsequent telomere elongation. Required also for telomere recombination to repair telomeric ends in the absence of telomerase. KU70, of the KU70/KU80 heterodimer, binds to the stem loop of TLC1, the RNA component of telomerase. Involved in telomere maintenance. Interacts with telomeric repeats and subtelomeric sequences thereby controlling telomere length and protecting against subtelomeric rearrangement. Maintains telomeric chromatin, which is involved in silencing the expression of genes located at the telomere. Required for mating-type switching. The sequence is that of ATP-dependent DNA helicase II subunit 1 (YKU70) from Saccharomyces cerevisiae (strain ATCC 204508 / S288c) (Baker's yeast).